A 135-amino-acid chain; its full sequence is Rheacalcin-1 (135 aa).

Intrachain disulfides connect cysteine 6-cysteine 17, cysteine 34-cysteine 131, and cysteine 106-cysteine 123. The C-type lectin domain occupies 13-132 (FRGNCYGYFR…CSERNAFICK (120 aa)).

The protein localises to the secreted. The protein resides in the extracellular space. It localises to the extracellular matrix. In Rhea americana (Greater rhea), this protein is Rheacalcin-1.